Here is a 432-residue protein sequence, read N- to C-terminus: 3-phosphoshikimate 1-carboxyvinyltransferase (432 aa).

The 3-phosphoshikimate site is built by Lys22, Ser23, and Arg27. Lys22 contacts phosphoenolpyruvate. Residues Gly96 and Arg127 each contribute to the phosphoenolpyruvate site. 3-phosphoshikimate-binding residues include Ser173, Ser174, Gln175, Ser201, Asp316, Asn339, and Lys343. Gln175 contacts phosphoenolpyruvate. The Proton acceptor role is filled by Asp316. The phosphoenolpyruvate site is built by Arg347, Arg391, and Lys416.

The protein belongs to the EPSP synthase family. In terms of assembly, monomer.

It localises to the cytoplasm. The catalysed reaction is 3-phosphoshikimate + phosphoenolpyruvate = 5-O-(1-carboxyvinyl)-3-phosphoshikimate + phosphate. Its pathway is metabolic intermediate biosynthesis; chorismate biosynthesis; chorismate from D-erythrose 4-phosphate and phosphoenolpyruvate: step 6/7. Functionally, catalyzes the transfer of the enolpyruvyl moiety of phosphoenolpyruvate (PEP) to the 5-hydroxyl of shikimate-3-phosphate (S3P) to produce enolpyruvyl shikimate-3-phosphate and inorganic phosphate. The chain is 3-phosphoshikimate 1-carboxyvinyltransferase from Haemophilus influenzae (strain PittGG).